A 369-amino-acid chain; its full sequence is MSKDYFIGLMSGTSMDGVDAVLVQFSQGEATLVERHSQAIPKHTLSGLQRLCLPGSDEITRLGQLDRSVGLLFASAVNALLEKAGVSKEQVVAIGSHGQTVRHMPNLDMGFTLQIGDPNTIAVETGIDVIADFRRKDIALGGQGAPLVPAFHQQMFSKPDTNRIILNIGGISNVTYLPGNSQAVVGFDTGPGNTLIDAWIQQVKHEAYDKDGAWAASGETDEKLLMYLLSHSYFSMGFPKSTGRELFNQAWLEQQTAAFGHLSEADIQSTLLDVTCHSIAKDVLTLSADGELFVCGGGAFNRELMSRLHNLLPSYQIDSTASLGMNPQWVEGIAFAWLAMRHNQGLSGNLPAVTGASREAVLGSLFPAA.

Residue 12-19 participates in ATP binding; sequence GTSMDGVD.

Belongs to the anhydro-N-acetylmuramic acid kinase family.

The enzyme catalyses 1,6-anhydro-N-acetyl-beta-muramate + ATP + H2O = N-acetyl-D-muramate 6-phosphate + ADP + H(+). It functions in the pathway amino-sugar metabolism; 1,6-anhydro-N-acetylmuramate degradation. It participates in cell wall biogenesis; peptidoglycan recycling. Its function is as follows. Catalyzes the specific phosphorylation of 1,6-anhydro-N-acetylmuramic acid (anhMurNAc) with the simultaneous cleavage of the 1,6-anhydro ring, generating MurNAc-6-P. Is required for the utilization of anhMurNAc either imported from the medium or derived from its own cell wall murein, and thus plays a role in cell wall recycling. This Shewanella woodyi (strain ATCC 51908 / MS32) protein is Anhydro-N-acetylmuramic acid kinase.